A 329-amino-acid polypeptide reads, in one-letter code: Acetyl-coenzyme A carboxylase carboxyl transferase subunit alpha (329 aa).

One can recognise a CoA carboxyltransferase C-terminal domain in the interval glutamine 40 to glutamate 294.

It belongs to the AccA family. As to quaternary structure, acetyl-CoA carboxylase is a heterohexamer composed of biotin carboxyl carrier protein (AccB), biotin carboxylase (AccC) and two subunits each of ACCase subunit alpha (AccA) and ACCase subunit beta (AccD).

The protein localises to the cytoplasm. The enzyme catalyses N(6)-carboxybiotinyl-L-lysyl-[protein] + acetyl-CoA = N(6)-biotinyl-L-lysyl-[protein] + malonyl-CoA. It functions in the pathway lipid metabolism; malonyl-CoA biosynthesis; malonyl-CoA from acetyl-CoA: step 1/1. Its function is as follows. Component of the acetyl coenzyme A carboxylase (ACC) complex. First, biotin carboxylase catalyzes the carboxylation of biotin on its carrier protein (BCCP) and then the CO(2) group is transferred by the carboxyltransferase to acetyl-CoA to form malonyl-CoA. In Prochlorococcus marinus (strain MIT 9211), this protein is Acetyl-coenzyme A carboxylase carboxyl transferase subunit alpha.